Here is a 371-residue protein sequence, read N- to C-terminus: MHIVSFIIFFFALFFPISICYKINGVCDFSSEGLSLLPEEKLDFSVSRNVDKLSDENNVRHCVHFSKGFEYLRFICPMRKDNYEGIEIRPVECFEYIHIEGREHKLSEILKGSLYEKSINDNIMTRDVFIPPTIYEDMFFECTCDNSLTFKNNMIGIRGIMKIHLKKNILYGCDFDHDEKLMKNKTAFTNFYDKQKILPLIGNNNNDDDNNDDDNNNDNNNNDNNNNNNNNNNNNNNNNNNNITCNVTIKKSQVYLGIICPDGYTLYPNDCFKNVIYDNNIIIPLKKIIPHDILYHQDKNKRITFASFTLNINENPPGFTCYCIKDQTNINNPLIVNFHFSNQETSYATKNKNLFFYFIFIFPFLYVILLL.

Positions 1 to 20 (MHIVSFIIFFFALFFPISIC) are cleaved as a signal peptide. 2 consecutive 6-Cys domains span residues 23–168 (INGV…LKKN) and 169–343 (ILYG…FSNQ). Disulfide bonds link Cys27-Cys62, Cys76-Cys144, Cys93-Cys142, and Cys173-Cys245. N-linked (GlcNAc...) asparagine glycosylation occurs at Asn184. The segment at 202 to 239 (GNNNNDDDNNDDDNNNDNNNNDNNNNNNNNNNNNNNNN) is disordered. Positions 206 to 216 (NDDDNNDDDNN) are enriched in acidic residues. Residues 217-239 (NDNNNNDNNNNNNNNNNNNNNNN) are compositionally biased toward low complexity. 2 N-linked (GlcNAc...) asparagine glycosylation sites follow: Asn242 and Asn246. 2 cysteine pairs are disulfide-bonded: Cys260–Cys323 and Cys271–Cys321.

It localises to the cell surface. It is found in the cell membrane. The protein is Surface protein P12p (PFS12P) of Plasmodium falciparum (isolate 3D7).